The following is a 611-amino-acid chain: Actin-interacting protein 1 (611 aa).

9 WD repeats span residues E57–K96, G145–T185, E188–V227, A237–T276, G322–V361, P446–V485, V489–H528, F534–I573, and H579–P610.

Belongs to the WD repeat AIP1 family.

The protein resides in the cytoplasm. Its subcellular location is the cytoskeleton. Functionally, induces disassembly of actin filaments in conjunction with ADF/cofilin family proteins. Regulator of actin organization in myofibrils. The chain is Actin-interacting protein 1 (unc-78) from Caenorhabditis elegans.